Here is a 416-residue protein sequence, read N- to C-terminus: UPF0761 membrane protein Mpe_A1422 (416 aa).

6 helical membrane passes run 63–83 (IALV…PMFG), 120–140 (LGTV…LTID), 159–179 (VLVY…SLTL), 198–218 (LSVL…AGLF), 234–256 (GGLF…LAQV), and 271–291 (IFLI…VIAA).

It belongs to the UPF0761 family.

It is found in the cell inner membrane. In Methylibium petroleiphilum (strain ATCC BAA-1232 / LMG 22953 / PM1), this protein is UPF0761 membrane protein Mpe_A1422.